A 184-amino-acid polypeptide reads, in one-letter code: UPF0316 protein BLi00691/BL01474 (184 aa).

3 helical membrane passes run 9–29, 41–61, and 67–87; these read GVIM…FLTL, LAAF…GLVL, and IQNV…GTKI.

Belongs to the UPF0316 family.

It localises to the cell membrane. This Bacillus licheniformis (strain ATCC 14580 / DSM 13 / JCM 2505 / CCUG 7422 / NBRC 12200 / NCIMB 9375 / NCTC 10341 / NRRL NRS-1264 / Gibson 46) protein is UPF0316 protein BLi00691/BL01474.